Reading from the N-terminus, the 296-residue chain is tRNA dimethylallyltransferase (296 aa).

9-16 (GTTASGKS) serves as a coordination point for ATP. 11–16 (TASGKS) is a substrate binding site. The tract at residues 34-37 (DSLA) is interaction with substrate tRNA.

It belongs to the IPP transferase family. In terms of assembly, monomer. The cofactor is Mg(2+).

The enzyme catalyses adenosine(37) in tRNA + dimethylallyl diphosphate = N(6)-dimethylallyladenosine(37) in tRNA + diphosphate. Functionally, catalyzes the transfer of a dimethylallyl group onto the adenine at position 37 in tRNAs that read codons beginning with uridine, leading to the formation of N6-(dimethylallyl)adenosine (i(6)A). The chain is tRNA dimethylallyltransferase from Campylobacter curvus (strain 525.92).